The sequence spans 522 residues: tRNA-2-methylthio-N(6)-dimethylallyladenosine synthase (522 aa).

A compositionally biased stretch (low complexity) spans 1 to 26 (MSLTIPSPASGTSTSATTDTAPAAAP). The disordered stretch occupies residues 1 to 27 (MSLTIPSPASGTSTSATTDTAPAAAPQ). One can recognise an MTTase N-terminal domain in the interval 28 to 143 (RTYQVRTFGC…LPALLDRARH (116 aa)). C37, C72, C106, C180, C184, and C187 together coordinate [4Fe-4S] cluster. Positions 166–396 (RDSVYSGWVS…TALQDRIAAE (231 aa)) constitute a Radical SAM core domain. The TRAM domain maps to 399 to 469 (ARQLGRRVEV…AFHLVADPAS (71 aa)). Positions 481 to 522 (GDAWDRSQADSCGAPVAGGGAGSNGGKGGVSLGMPALPVRRS) are disordered. Gly residues predominate over residues 496 to 511 (VAGGGAGSNGGKGGVS).

Belongs to the methylthiotransferase family. MiaB subfamily. As to quaternary structure, monomer. [4Fe-4S] cluster serves as cofactor.

The protein resides in the cytoplasm. It carries out the reaction N(6)-dimethylallyladenosine(37) in tRNA + (sulfur carrier)-SH + AH2 + 2 S-adenosyl-L-methionine = 2-methylsulfanyl-N(6)-dimethylallyladenosine(37) in tRNA + (sulfur carrier)-H + 5'-deoxyadenosine + L-methionine + A + S-adenosyl-L-homocysteine + 2 H(+). Catalyzes the methylthiolation of N6-(dimethylallyl)adenosine (i(6)A), leading to the formation of 2-methylthio-N6-(dimethylallyl)adenosine (ms(2)i(6)A) at position 37 in tRNAs that read codons beginning with uridine. The polypeptide is tRNA-2-methylthio-N(6)-dimethylallyladenosine synthase (Arthrobacter sp. (strain FB24)).